The primary structure comprises 122 residues: Large ribosomal subunit protein uL14 (122 aa).

The protein belongs to the universal ribosomal protein uL14 family. Part of the 50S ribosomal subunit. Forms a cluster with proteins L3 and L19. In the 70S ribosome, L14 and L19 interact and together make contacts with the 16S rRNA in bridges B5 and B8.

Binds to 23S rRNA. Forms part of two intersubunit bridges in the 70S ribosome. The polypeptide is Large ribosomal subunit protein uL14 (Hyphomonas neptunium (strain ATCC 15444)).